A 380-amino-acid chain; its full sequence is Carbamoyl phosphate synthase small chain (380 aa).

The CPSase stretch occupies residues 1–187 (MTTSTRGAAK…VVPAIGAKRF (187 aa)). L-glutamine contacts are provided by serine 55, glycine 236, and glycine 238. One can recognise a Glutamine amidotransferase type-1 domain in the interval 188-380 (TVAAVDLGIK…FVSLMEGQRA (193 aa)). Catalysis depends on cysteine 264, which acts as the Nucleophile. L-glutamine is bound by residues phenylalanine 265, glutamine 268, asparagine 306, glycine 308, and phenylalanine 309. Active-site residues include histidine 354 and glutamate 356.

This sequence belongs to the CarA family. Composed of two chains; the small (or glutamine) chain promotes the hydrolysis of glutamine to ammonia, which is used by the large (or ammonia) chain to synthesize carbamoyl phosphate. Tetramer of heterodimers (alpha,beta)4.

It carries out the reaction hydrogencarbonate + L-glutamine + 2 ATP + H2O = carbamoyl phosphate + L-glutamate + 2 ADP + phosphate + 2 H(+). It catalyses the reaction L-glutamine + H2O = L-glutamate + NH4(+). It participates in amino-acid biosynthesis; L-arginine biosynthesis; carbamoyl phosphate from bicarbonate: step 1/1. It functions in the pathway pyrimidine metabolism; UMP biosynthesis via de novo pathway; (S)-dihydroorotate from bicarbonate: step 1/3. Small subunit of the glutamine-dependent carbamoyl phosphate synthetase (CPSase). CPSase catalyzes the formation of carbamoyl phosphate from the ammonia moiety of glutamine, carbonate, and phosphate donated by ATP, constituting the first step of 2 biosynthetic pathways, one leading to arginine and/or urea and the other to pyrimidine nucleotides. The small subunit (glutamine amidotransferase) binds and cleaves glutamine to supply the large subunit with the substrate ammonia. In Streptomyces avermitilis (strain ATCC 31267 / DSM 46492 / JCM 5070 / NBRC 14893 / NCIMB 12804 / NRRL 8165 / MA-4680), this protein is Carbamoyl phosphate synthase small chain.